The following is a 357-amino-acid chain: Alanine racemase (357 aa).

The active-site Proton acceptor; specific for D-alanine is Lys-34. Lys-34 carries the post-translational modification N6-(pyridoxal phosphate)lysine. A substrate-binding site is contributed by Arg-130. The Proton acceptor; specific for L-alanine role is filled by Tyr-253. Met-301 is a substrate binding site.

The protein belongs to the alanine racemase family. The cofactor is pyridoxal 5'-phosphate.

It catalyses the reaction L-alanine = D-alanine. It functions in the pathway amino-acid biosynthesis; D-alanine biosynthesis; D-alanine from L-alanine: step 1/1. In terms of biological role, catalyzes the interconversion of L-alanine and D-alanine. May also act on other amino acids. In Mannheimia succiniciproducens (strain KCTC 0769BP / MBEL55E), this protein is Alanine racemase (alr).